The following is a 125-amino-acid chain: Protein ApaG (125 aa).

Residues 1–125 enclose the ApaG domain; sequence MINSPRVCVQ…FRLAVPTLIH (125 aa).

This Klebsiella pneumoniae (strain 342) protein is Protein ApaG.